The sequence spans 278 residues: UPF0758 protein BURPS668_0979 (278 aa).

A disordered region spans residues 1-64 (MQYEIVSAGE…ATAAARRGRD (64 aa)). Residues 22–59 (AAAPAAPSSAVPSSAALSSAALSSAARPTGAPPATAAA) are compositionally biased toward low complexity. One can recognise an MPN domain in the interval 156 to 278 (LVDSPGAVDD…TFSFAQAGWI (123 aa)). Residues His-227, His-229, and Asp-240 each coordinate Zn(2+). The JAMM motif motif lies at 227-240 (HNHPSGAVRPSAAD).

Belongs to the UPF0758 family.

In Burkholderia pseudomallei (strain 668), this protein is UPF0758 protein BURPS668_0979.